A 468-amino-acid chain; its full sequence is UDP-N-acetylmuramoyl-L-alanine--L-glutamate ligase (468 aa).

Residue 122-128 (GTKGKST) coordinates ATP.

This sequence belongs to the MurCDEF family. MurD2 subfamily.

The protein localises to the cytoplasm. The catalysed reaction is UDP-N-acetyl-alpha-D-muramoyl-L-alanine + L-glutamate + ATP = UDP-N-acetyl-alpha-D-muramoyl-L-alanyl-L-glutamate + ADP + phosphate + H(+). It participates in cell wall biogenesis; peptidoglycan biosynthesis. Its function is as follows. Cell wall formation. Catalyzes the addition of L-glutamate to the nucleotide precursor UDP-N-acetylmuramoyl-L-alanine. This Xanthomonas axonopodis pv. citri (strain 306) protein is UDP-N-acetylmuramoyl-L-alanine--L-glutamate ligase.